Here is a 168-residue protein sequence, read N- to C-terminus: Thiosulfate dehydrogenase [quinone] small subunit (168 aa).

Residues I6–A26 traverse the membrane as a helical segment.

As to quaternary structure, heterodimer of a large and a small subunit in a 2:2 stoichiometry. TQO may associate with the terminal oxidase formed by doxBCE. In terms of processing, the N-terminus is blocked. Post-translationally, glycosylated.

The protein localises to the cell membrane. The enzyme catalyses 6-decylubiquinone + 2 thiosulfate = 6-decylubiquinol + tetrathionate. Its activity is regulated as follows. Inhibited by sulfite, metabisulfite and dithonite. Functionally, TQO plays a role in sulfur oxidation and is proposed to couple sulfur oxidation to dioxygen reduction; caldariellaquinone or sulfolobus quinone seem to serve to transfer electrons to the electron transport chain terminal oxidase formed by DoxBCE. This is Thiosulfate dehydrogenase [quinone] small subunit (doxA) from Acidianus ambivalens (Desulfurolobus ambivalens).